Consider the following 520-residue polypeptide: Laccase-1 (520 aa).

An N-terminal signal peptide occupies residues 1–19 (MRLSNALVLVAACISSVVA). Plastocyanin-like domains follow at residues 21–145 (TRTF…FIVY), 157–305 (VDDE…LTLA), and 375–488 (TVPV…FAEA). Cu cation is bound by residues His-82 and His-84. Cystine bridges form between Cys-103-Cys-509 and Cys-135-Cys-229. Asn-108 carries an N-linked (GlcNAc...) asparagine glycan. Positions 127 and 129 each coordinate Cu cation. N-linked (GlcNAc...) asparagine glycosylation is found at Asn-239 and Asn-299. 7 residues coordinate Cu cation: His-417, His-420, His-422, His-470, Cys-471, His-472, and His-476. Asn-492 carries N-linked (GlcNAc...) asparagine glycosylation.

This sequence belongs to the multicopper oxidase family. Cu cation serves as cofactor.

Its subcellular location is the secreted. It carries out the reaction 4 hydroquinone + O2 = 4 benzosemiquinone + 2 H2O. Lignin degradation and detoxification of lignin-derived products. This Agaricus bisporus (White button mushroom) protein is Laccase-1 (lcc1).